The chain runs to 436 residues: Glutamyl-tRNA reductase (436 aa).

Substrate-binding positions include 56-59 (TCNR), S114, 119-121 (EAQ), and Q125. Catalysis depends on C57, which acts as the Nucleophile. 194–199 (GAGEMI) provides a ligand contact to NADP(+).

Belongs to the glutamyl-tRNA reductase family. As to quaternary structure, homodimer.

The catalysed reaction is (S)-4-amino-5-oxopentanoate + tRNA(Glu) + NADP(+) = L-glutamyl-tRNA(Glu) + NADPH + H(+). Its pathway is porphyrin-containing compound metabolism; protoporphyrin-IX biosynthesis; 5-aminolevulinate from L-glutamyl-tRNA(Glu): step 1/2. Its function is as follows. Catalyzes the NADPH-dependent reduction of glutamyl-tRNA(Glu) to glutamate 1-semialdehyde (GSA). This is Glutamyl-tRNA reductase from Acidovorax sp. (strain JS42).